A 382-amino-acid polypeptide reads, in one-letter code: MNLKEKTRALFAEIFSYPATHTIQAPGRVNLIGEHTDYNDGFVLPCAIDYQTVISCAPRDDRTVRVIAADYDNQVEEFSLDAPIVTHDSQQWSNYVRGVVKHLQQRNNAFGGVDMVISGNVPQGAGLSSSASLEVAVGTVFQQLYHLPLDGAQIALNGQEAENQFVGCNCGIMDQLISALGKKDHALLIDCRTLGAKAVSMPKGVAVVIINSNFKRTLVGSEYNTRREQCETGARFFQQPALRDVSLEAFNAVASELDPVVAKRVRHVLSENARTVEAASALEKGDLQRMGQLMAESHASMRDDFEITVPQIDTLVDIVKATIGDQGGVRMTGGGFGGCVVALIPEDLVPAVRQAVAQQYEAKTGIKETFYVCKPSQGAGQC.

Glu-34–Asp-37 serves as a coordination point for substrate. Gly-124 to Ser-130 serves as a coordination point for ATP. Mg(2+) is bound by residues Ser-130 and Glu-162. Catalysis depends on Asp-174, which acts as the Proton acceptor. Tyr-223 is a binding site for substrate.

Belongs to the GHMP kinase family. GalK subfamily.

It is found in the cytoplasm. It catalyses the reaction alpha-D-galactose + ATP = alpha-D-galactose 1-phosphate + ADP + H(+). Its pathway is carbohydrate metabolism; galactose metabolism. Functionally, catalyzes the transfer of the gamma-phosphate of ATP to D-galactose to form alpha-D-galactose-1-phosphate (Gal-1-P). The sequence is that of Galactokinase from Salmonella choleraesuis (strain SC-B67).